The primary structure comprises 425 residues: Serine--tRNA ligase (425 aa).

231 to 233 (TAE) is a binding site for L-serine. 262–264 (RSE) provides a ligand contact to ATP. L-serine is bound at residue glutamate 285. ATP is bound at residue 349 to 352 (EISS). Serine 385 is a binding site for L-serine.

This sequence belongs to the class-II aminoacyl-tRNA synthetase family. Type-1 seryl-tRNA synthetase subfamily. Homodimer. The tRNA molecule binds across the dimer.

The protein localises to the cytoplasm. The enzyme catalyses tRNA(Ser) + L-serine + ATP = L-seryl-tRNA(Ser) + AMP + diphosphate + H(+). It carries out the reaction tRNA(Sec) + L-serine + ATP = L-seryl-tRNA(Sec) + AMP + diphosphate + H(+). The protein operates within aminoacyl-tRNA biosynthesis; selenocysteinyl-tRNA(Sec) biosynthesis; L-seryl-tRNA(Sec) from L-serine and tRNA(Sec): step 1/1. Its function is as follows. Catalyzes the attachment of serine to tRNA(Ser). Is also able to aminoacylate tRNA(Sec) with serine, to form the misacylated tRNA L-seryl-tRNA(Sec), which will be further converted into selenocysteinyl-tRNA(Sec). This is Serine--tRNA ligase from Maricaulis maris (strain MCS10) (Caulobacter maris).